A 207-amino-acid chain; its full sequence is LexA repressor (207 aa).

The segment at residues 28–48 (VREIGEAVGLASSSTVHGHLS) is a DNA-binding region (H-T-H motif). Active-site for autocatalytic cleavage activity residues include serine 130 and lysine 168.

The protein belongs to the peptidase S24 family. As to quaternary structure, homodimer.

It carries out the reaction Hydrolysis of Ala-|-Gly bond in repressor LexA.. Represses a number of genes involved in the response to DNA damage (SOS response), including recA and lexA. In the presence of single-stranded DNA, RecA interacts with LexA causing an autocatalytic cleavage which disrupts the DNA-binding part of LexA, leading to derepression of the SOS regulon and eventually DNA repair. The polypeptide is LexA repressor (Staphylococcus aureus (strain MSSA476)).